A 310-amino-acid chain; its full sequence is Aspartate carbamoyltransferase catalytic subunit (310 aa).

Positions 58 and 59 each coordinate carbamoyl phosphate. Residue Lys86 participates in L-aspartate binding. Arg108, His136, and Gln139 together coordinate carbamoyl phosphate. L-aspartate-binding residues include Arg169 and Arg222. Positions 264 and 265 each coordinate carbamoyl phosphate.

Belongs to the aspartate/ornithine carbamoyltransferase superfamily. ATCase family. As to quaternary structure, heterododecamer (2C3:3R2) of six catalytic PyrB chains organized as two trimers (C3), and six regulatory PyrI chains organized as three dimers (R2).

The catalysed reaction is carbamoyl phosphate + L-aspartate = N-carbamoyl-L-aspartate + phosphate + H(+). The protein operates within pyrimidine metabolism; UMP biosynthesis via de novo pathway; (S)-dihydroorotate from bicarbonate: step 2/3. In terms of biological role, catalyzes the condensation of carbamoyl phosphate and aspartate to form carbamoyl aspartate and inorganic phosphate, the committed step in the de novo pyrimidine nucleotide biosynthesis pathway. The protein is Aspartate carbamoyltransferase catalytic subunit of Campylobacter fetus subsp. fetus (strain 82-40).